Here is a 133-residue protein sequence, read N- to C-terminus: L-ectoine synthase (133 aa).

Belongs to the ectoine synthase family.

The enzyme catalyses (2S)-4-acetamido-2-aminobutanoate = L-ectoine + H2O. Its pathway is amine and polyamine biosynthesis; ectoine biosynthesis; L-ectoine from L-aspartate 4-semialdehyde: step 3/3. Its function is as follows. Catalyzes the circularization of gamma-N-acetyl-alpha,gamma-diaminobutyric acid (ADABA) to ectoine (1,4,5,6-tetrahydro-2-methyl-4-pyrimidine carboxylic acid), which is an excellent osmoprotectant. The sequence is that of L-ectoine synthase from Bordetella petrii (strain ATCC BAA-461 / DSM 12804 / CCUG 43448).